The primary structure comprises 458 residues: MYGKIEKIHFVGIGGIGMSGIAEVLLNLGYKVSGSDLRKTEITERLEGLGGEIFIGHARENVANVDVVVISSAVHDDNPEVVEAMERLIPVIPRAEMLAELMRMKYGIAIAGTHGKTTTTSMVATILAKGGIDPTIVIGGRLNSIGTNARLGQGQFLVAEADESDGSFLKLSPTIAVVTNIDADHLDFYKDIDEIKDTFVQFINKVPFYGLAVLCLDNGNIADIIPLVKKRFNTYGLSTQADFRATDVRHTGFTTSFVAHYKGTLLGEITFSMPGAHNVLNALATIAVAMELNIPFAEIQAGFKAFGGVGRRFQVKGEVRDIMVVDDYGHHPTEIRATLAAAKGGWDRRLVVAFQPHRYSRTKELFEEFVKAFYDADILILTDIYPAGEKPIEGITAESLAARIKRHGQKDVTYIADRNAVCDHLLGIVKPGDIVITLGAGNIWQVGETLVEKLKGDL.

Position 112-118 (112-118 (GTHGKTT)) interacts with ATP.

This sequence belongs to the MurCDEF family.

It localises to the cytoplasm. The enzyme catalyses UDP-N-acetyl-alpha-D-muramate + L-alanine + ATP = UDP-N-acetyl-alpha-D-muramoyl-L-alanine + ADP + phosphate + H(+). Its pathway is cell wall biogenesis; peptidoglycan biosynthesis. Functionally, cell wall formation. This chain is UDP-N-acetylmuramate--L-alanine ligase, found in Geotalea uraniireducens (strain Rf4) (Geobacter uraniireducens).